Reading from the N-terminus, the 204-residue chain is Large ribosomal subunit protein bL25 (204 aa).

This sequence belongs to the bacterial ribosomal protein bL25 family. CTC subfamily. Part of the 50S ribosomal subunit; part of the 5S rRNA/L5/L18/L25 subcomplex. Contacts the 5S rRNA. Binds to the 5S rRNA independently of L5 and L18.

This is one of the proteins that binds to the 5S RNA in the ribosome where it forms part of the central protuberance. This Pseudoalteromonas translucida (strain TAC 125) protein is Large ribosomal subunit protein bL25.